The sequence spans 258 residues: Thiazole synthase (258 aa).

The active-site Schiff-base intermediate with DXP is the lysine 98. 1-deoxy-D-xylulose 5-phosphate is bound by residues glycine 159, 185 to 186 (AG), and 207 to 208 (NT).

It belongs to the ThiG family. As to quaternary structure, homotetramer. Forms heterodimers with either ThiH or ThiS.

Its subcellular location is the cytoplasm. The enzyme catalyses [ThiS sulfur-carrier protein]-C-terminal-Gly-aminoethanethioate + 2-iminoacetate + 1-deoxy-D-xylulose 5-phosphate = [ThiS sulfur-carrier protein]-C-terminal Gly-Gly + 2-[(2R,5Z)-2-carboxy-4-methylthiazol-5(2H)-ylidene]ethyl phosphate + 2 H2O + H(+). The protein operates within cofactor biosynthesis; thiamine diphosphate biosynthesis. Functionally, catalyzes the rearrangement of 1-deoxy-D-xylulose 5-phosphate (DXP) to produce the thiazole phosphate moiety of thiamine. Sulfur is provided by the thiocarboxylate moiety of the carrier protein ThiS. In vitro, sulfur can be provided by H(2)S. This chain is Thiazole synthase, found in Bacillus cereus (strain ATCC 14579 / DSM 31 / CCUG 7414 / JCM 2152 / NBRC 15305 / NCIMB 9373 / NCTC 2599 / NRRL B-3711).